The chain runs to 220 residues: UPF0758 protein APL_1970 (220 aa).

The MPN domain maps to 98–220 (NINEPYLAVM…YFSFEEEKFR (123 aa)). Zn(2+)-binding residues include His-169, His-171, and Asp-182. A JAMM motif motif is present at residues 169–182 (HNHPSGNCTPSESD).

Belongs to the UPF0758 family.

This is UPF0758 protein APL_1970 from Actinobacillus pleuropneumoniae serotype 5b (strain L20).